Reading from the N-terminus, the 747-residue chain is Protein O-mannosyl-transferase 1 (747 aa).

9 helical membrane-spanning segments follow: residues 8–28 (PVVV…MGLL), 40–60 (VVFD…QIFF), 68–88 (FGHM…NFLW), 99–119 (VPVW…VPMA), 122–142 (IVLE…LMLI), 154–174 (LLES…LKFF), 183–203 (SLSW…AVGI), 206–226 (MGVF…WHLL), and 269–289 (LLVI…ILVF). MIR domains follow at residues 318 to 381 (PLEV…VKDP), 392 to 449 (PRPV…LEIV), and 453 to 513 (SDTD…VEEH). Residues Asn435, Asn471, and Asn539 are each glycosylated (N-linked (GlcNAc...) asparagine). Helical transmembrane passes span 597-617 (IVIW…SLWY), 636-656 (WVLA…PFFL), and 661-681 (LFLY…PVVL).

It belongs to the glycosyltransferase 39 family. As to quaternary structure, interacts with POMT2. Widely expressed. Highly expressed in testis, heart and pancreas. Detected at lower levels in kidney, skeletal muscle, brain, placenta, lung and liver.

Its subcellular location is the endoplasmic reticulum membrane. It carries out the reaction a di-trans,poly-cis-dolichyl beta-D-mannosyl phosphate + L-seryl-[protein] = 3-O-(alpha-D-mannosyl)-L-seryl-[protein] + a di-trans,poly-cis-dolichyl phosphate + H(+). The enzyme catalyses a di-trans,poly-cis-dolichyl beta-D-mannosyl phosphate + L-threonyl-[protein] = 3-O-(alpha-D-mannosyl)-L-threonyl-[protein] + a di-trans,poly-cis-dolichyl phosphate + H(+). Its pathway is protein modification; protein glycosylation. With respect to regulation, slightly activated by Mg(2+) and inhibited by both Ca(+) and Mn(2+). EDTA ha no effect on activity in vitro. In terms of biological role, transfers mannosyl residues to the hydroxyl group of serine or threonine residues. Coexpression of both POMT1 and POMT2 is necessary for enzyme activity, expression of either POMT1 or POMT2 alone is insufficient. Essentially dedicated to O-mannosylation of alpha-DAG1 and few other proteins but not of cadherins and protocaherins. The chain is Protein O-mannosyl-transferase 1 (POMT1) from Homo sapiens (Human).